Here is a 67-residue protein sequence, read N- to C-terminus: Envelope small membrane protein (67 aa).

Residue Gly-2 is the site of N-myristoyl glycine; by host attachment. The endoplasmic reticulum retention signal stretch occupies residues 2-15; that stretch reads GLVWSLISNSIQTI. The Virion surface segment spans residues 2–27; the sequence is GLVWSLISNSIQTIIADFAISVIDAA. The helical transmembrane segment at 28-48 threads the bilayer; the sequence is LFFLMLLALAVVTVFLFWLIV. Over 49–67 the chain is Intravirion; that stretch reads AIGRSLVARCSRGARYRPV.

This sequence belongs to the arteriviridae E protein family. In terms of assembly, homomultimer. Associates with itself into higher-order structures, including dimers, trimers and tetramers. Associates with the GP2b-GP3-GP4 complex. In terms of processing, myristoylated. Not glycosylated.

It is found in the virion membrane. The protein resides in the host endoplasmic reticulum membrane. Its subcellular location is the host Golgi apparatus membrane. The protein localises to the secreted. Functionally, minor envelope protein. May function as a viroporin in the virion envelope that facilitates uncoating of the virus in order to release the genomic RNA into the cytoplasm for subsequent replication. This Equidae (horses) protein is Envelope small membrane protein (GP2a).